The primary structure comprises 404 residues: Glycosylated lysosomal membrane protein (404 aa).

A signal peptide spans 1 to 35 (MFRCWGPHWGWVPCAPTPWLLLSLLVCSAPFGLQG). The Lumenal portion of the chain corresponds to 36–370 (EETRQVSMEV…VDIFSPLVLG (335 aa)). N-linked (GlcNAc...) asparagine glycosylation is found at Asn-64, Asn-85, Asn-94, Asn-133, Asn-157, Asn-166, Asn-185, Asn-228, and Asn-331. Residues 371-391 (IMAVALGAPGLMFLGGGLFLL) traverse the membrane as a helical segment. Residues 392–404 (LRHRRYSEYQSIN) lie on the Cytoplasmic side of the membrane. The short motif at 400–404 (YQSIN) is the Lysosomal targeting motif element.

This sequence belongs to the GLMP family. As to quaternary structure, interacts (via lumenal domain) with lysosomal protein MFSD1; the interaction starts while both proteins are still in the endoplasmic reticulum and is required for stabilization of MFSD1 in lysosomes but has no direct effect on its targeting to lysosomes or transporter activity. Post-translationally, highly N-glycosylated. N-glycosylation is essential for GLMP stability and for MFSD1 lysosomal localization. Detected in brain, heart, liver, kidney, lung, intestine, testis and spleen. Expressed at highest levels in kidney cortex. However, another study reports highest expression levels in lung. Expressed in myoblasts with expression increasing during differentiation into myotubes.

The protein localises to the lysosome membrane. Its function is as follows. Required to protect lysosomal transporter MFSD1 from lysosomal proteolysis and for MFSD1 lysosomal localization. The chain is Glycosylated lysosomal membrane protein from Mus musculus (Mouse).